The chain runs to 207 residues: Uridine kinase (207 aa).

11–18 is a binding site for ATP; that stretch reads GGSGSGKT.

The protein belongs to the uridine kinase family.

Its subcellular location is the cytoplasm. It carries out the reaction uridine + ATP = UMP + ADP + H(+). The enzyme catalyses cytidine + ATP = CMP + ADP + H(+). It participates in pyrimidine metabolism; CTP biosynthesis via salvage pathway; CTP from cytidine: step 1/3. The protein operates within pyrimidine metabolism; UMP biosynthesis via salvage pathway; UMP from uridine: step 1/1. This Staphylococcus epidermidis (strain ATCC 35984 / DSM 28319 / BCRC 17069 / CCUG 31568 / BM 3577 / RP62A) protein is Uridine kinase.